A 424-amino-acid chain; its full sequence is Enolase (424 aa).

A (2R)-2-phosphoglycerate-binding site is contributed by Q162. E204 acts as the Proton donor in catalysis. Mg(2+) is bound by residues D241, E284, and D311. 4 residues coordinate (2R)-2-phosphoglycerate: K336, R365, S366, and K387. Catalysis depends on K336, which acts as the Proton acceptor.

Belongs to the enolase family. It depends on Mg(2+) as a cofactor.

The protein localises to the cytoplasm. It localises to the secreted. The protein resides in the cell surface. It carries out the reaction (2R)-2-phosphoglycerate = phosphoenolpyruvate + H2O. Its pathway is carbohydrate degradation; glycolysis; pyruvate from D-glyceraldehyde 3-phosphate: step 4/5. Its function is as follows. Catalyzes the reversible conversion of 2-phosphoglycerate (2-PG) into phosphoenolpyruvate (PEP). It is essential for the degradation of carbohydrates via glycolysis. This Rhizobium johnstonii (strain DSM 114642 / LMG 32736 / 3841) (Rhizobium leguminosarum bv. viciae) protein is Enolase.